An 800-amino-acid chain; its full sequence is Receptor like protein 26 (800 aa).

Positions 1-19 are cleaved as a signal peptide; that stretch reads MRLHFCSLLLLYCIVFVSS. Residues 20–733 are Extracellular-facing; it reads FLTTDALACL…EEEDEVIEWK (714 aa). Asparagine 49, asparagine 61, asparagine 83, asparagine 96, asparagine 101, and asparagine 113 each carry an N-linked (GlcNAc...) asparagine glycan. LRR repeat units follow at residues 89–113, 115–138, 139–161, 162–185, 187–212, 214–235, 236–259, 260–281, 285–307, 308–332, 334–357, and 358–381; these read LHQL…EFSN, TRLE…ISNL, ILLT…VRNL, TKLS…LLPT, PFLS…SSSS, LVRL…ISKL, INLN…VFAP, LKSL…LSSD, PLSL…IFKT, LQNL…FWKL, RLSI…VLLN, and SSVQ…PLGS. N-linked (GlcNAc...) asparagine glycans are attached at residues asparagine 145 and asparagine 160. The N-linked (GlcNAc...) asparagine glycan is linked to asparagine 207. Residue asparagine 247 is glycosylated (N-linked (GlcNAc...) asparagine). Residues asparagine 342 and asparagine 357 are each glycosylated (N-linked (GlcNAc...) asparagine). An LRR 13; degenerate repeat occupies 382-401; the sequence is IYLSAWNNSFTGNIPLSICN. Residues asparagine 388 and asparagine 401 are each glycosylated (N-linked (GlcNAc...) asparagine). LRR repeat units lie at residues 402–423, 424–446, 448–471, 472–494, 495–519, 522–546, 591–615, 616–639, 640–663, and 665–688; these read RSSL…PQCL, SNLK…EFHS, AKTQ…LLNC, SSLR…WLKA, LPNL…DRGP, FPEL…FFVN, LTFY…IGLL, KELI…LANV, TELE…LGSL, and FLAY…QFSG. A glycan (N-linked (GlcNAc...) asparagine) is linked at asparagine 470. 2 N-linked (GlcNAc...) asparagine glycosylation sites follow: asparagine 622 and asparagine 638. Residues 734–754 form a helical membrane-spanning segment; it reads AVFFGYWPGLLLGLVMAHVIA. Residues 755–800 lie on the Cytoplasmic side of the membrane; the sequence is SFKPKWFVKILGPAKGKQVDPVRLFMNLDSRWDSFNNKDTVEEEVI.

The protein belongs to the RLP family.

It is found in the cell membrane. In Arabidopsis thaliana (Mouse-ear cress), this protein is Receptor like protein 26.